A 307-amino-acid polypeptide reads, in one-letter code: Aspartate carbamoyltransferase catalytic subunit (307 aa).

Positions 54 and 55 each coordinate carbamoyl phosphate. Lys-83 contributes to the L-aspartate binding site. Carbamoyl phosphate is bound by residues Arg-104, His-132, and Gln-135. L-aspartate contacts are provided by Arg-165 and Arg-228. Carbamoyl phosphate is bound by residues Leu-267 and Pro-268.

This sequence belongs to the aspartate/ornithine carbamoyltransferase superfamily. ATCase family. In terms of assembly, heterododecamer (2C3:3R2) of six catalytic PyrB chains organized as two trimers (C3), and six regulatory PyrI chains organized as three dimers (R2).

The catalysed reaction is carbamoyl phosphate + L-aspartate = N-carbamoyl-L-aspartate + phosphate + H(+). Its pathway is pyrimidine metabolism; UMP biosynthesis via de novo pathway; (S)-dihydroorotate from bicarbonate: step 2/3. Functionally, catalyzes the condensation of carbamoyl phosphate and aspartate to form carbamoyl aspartate and inorganic phosphate, the committed step in the de novo pyrimidine nucleotide biosynthesis pathway. This is Aspartate carbamoyltransferase catalytic subunit from Clostridium botulinum (strain Okra / Type B1).